The chain runs to 426 residues: Mitogen-activated protein kinase 8 (426 aa).

Positions 26-321 (YQNLKPIGSG…VDDALQHPYI (296 aa)) constitute a Protein kinase domain. ATP contacts are provided by residues 33–38 (GSGAQG) and Lys55. Asp151 functions as the Proton acceptor in the catalytic mechanism. At Thr183 the chain carries Phosphothreonine. The TXY motif lies at 183 to 185 (TPY). Tyr185 is subject to Phosphotyrosine. The interval 375 to 426 (QPAPLGAAVTDGSQAHTSSSSGDASSMSTDPTLPSDTDSSLETSAGTLGCCR) is disordered. Residues 384 to 404 (TDGSQAHTSSSSGDASSMSTD) are compositionally biased toward low complexity. The segment covering 405 to 420 (PTLPSDTDSSLETSAG) has biased composition (polar residues).

Belongs to the protein kinase superfamily. CMGC Ser/Thr protein kinase family. MAP kinase subfamily. It depends on Mg(2+) as a cofactor. Post-translationally, dually phosphorylated on Thr-183 and Tyr-185, which activates the enzyme. Strongly expressed in presumptive ectoderm and mesoderm regions and weakly expressed in endoderm regions during early stages of embryo development. Expressed in the head and dorsal regions during neurula and tailbud stages.

The protein resides in the cytoplasm. Its subcellular location is the nucleus. The protein localises to the synapse. The catalysed reaction is L-seryl-[protein] + ATP = O-phospho-L-seryl-[protein] + ADP + H(+). It carries out the reaction L-threonyl-[protein] + ATP = O-phospho-L-threonyl-[protein] + ADP + H(+). Its activity is regulated as follows. Activated by threonine and tyrosine phosphorylation, potentially by the dual-specificity kinase, MKK7. Indirectly activated by Wnt5a. Its function is as follows. Responds to activation by environmental stress and pro-inflammatory cytokines by phosphorylating a number of transcription factors, and thus regulating transcriptional activity. Regulates morphogenic cell movements, controlling convergent extension during gastrulation. May play a role in the regulation of the circadian clock. The protein is Mitogen-activated protein kinase 8 (mapk8) of Xenopus laevis (African clawed frog).